Consider the following 251-residue polypeptide: Carbohydrate deacetylase (251 aa).

Residues His59 and His122 each contribute to the Mg(2+) site.

The protein belongs to the YdjC deacetylase family. In terms of assembly, homodimer. Mg(2+) serves as cofactor.

Its function is as follows. Probably catalyzes the deacetylation of acetylated carbohydrates an important step in the degradation of oligosaccharides. In Vibrio campbellii (strain ATCC BAA-1116), this protein is Carbohydrate deacetylase.